Here is a 130-residue protein sequence, read N- to C-terminus: Small ribosomal subunit protein uS11 (130 aa).

The protein belongs to the universal ribosomal protein uS11 family. As to quaternary structure, part of the 30S ribosomal subunit. Interacts with proteins S7 and S18. Binds to IF-3.

Functionally, located on the platform of the 30S subunit, it bridges several disparate RNA helices of the 16S rRNA. Forms part of the Shine-Dalgarno cleft in the 70S ribosome. The chain is Small ribosomal subunit protein uS11 from Campylobacter fetus subsp. fetus (strain 82-40).